We begin with the raw amino-acid sequence, 316 residues long: Olfactory receptor 1N2 (316 aa).

The Extracellular segment spans residues methionine 1–proline 28. Asparagine 8 carries an N-linked (GlcNAc...) asparagine glycan. The chain crosses the membrane as a helical span at residues leucine 29–isoleucine 49. Residues leucine 50–threonine 60 lie on the Cytoplasmic side of the membrane. The chain crosses the membrane as a helical span at residues proline 61–isoleucine 81. The Extracellular portion of the chain corresponds to proline 82–cysteine 100. A disulfide bond links cysteine 100 and cysteine 182. Residues leucine 101–methionine 121 traverse the membrane as a helical segment. The Cytoplasmic segment spans residues alanine 122 to alanine 145. Residues leucine 146–leucine 166 traverse the membrane as a helical segment. Topologically, residues threonine 167–glutamate 199 are extracellular. Residues leucine 200–serine 220 form a helical membrane-spanning segment. Over tyrosine 221–threonine 243 the chain is Cytoplasmic. The helical transmembrane segment at cysteine 244 to leucine 264 threads the bilayer. At proline 265–glutamate 274 the chain is on the extracellular side. A helical transmembrane segment spans residues serine 275–leucine 295. At arginine 296–leucine 316 the chain is on the cytoplasmic side.

It belongs to the G-protein coupled receptor 1 family.

Its subcellular location is the membrane. Functionally, odorant receptor. This is Olfactory receptor 1N2 (OR1N2) from Homo sapiens (Human).